Consider the following 443-residue polypeptide: 26S proteasome regulatory subunit rpn501 (443 aa).

At Ser209 the chain carries Phosphoserine. Residues 230-402 (DVCKYYRAVY…QVISFKKSQN (173 aa)) form the PCI domain.

The protein belongs to the proteasome subunit p55 family.

The protein resides in the nucleus. Its function is as follows. Acts as a regulatory subunit of the 26S proteasome which is involved in the ATP-dependent degradation of ubiquitinated proteins. Required for proper proteasome assembly. The protein is 26S proteasome regulatory subunit rpn501 (rpn501) of Schizosaccharomyces pombe (strain 972 / ATCC 24843) (Fission yeast).